Reading from the N-terminus, the 274-residue chain is 3-methyl-2-oxobutanoate hydroxymethyltransferase (274 aa).

D49 and D88 together coordinate Mg(2+). 3-methyl-2-oxobutanoate is bound by residues 49-50, D88, and K118; that span reads DS. E120 lines the Mg(2+) pocket. The active-site Proton acceptor is E187.

It belongs to the PanB family. In terms of assembly, homodecamer; pentamer of dimers. Mg(2+) is required as a cofactor.

The protein localises to the cytoplasm. The enzyme catalyses 3-methyl-2-oxobutanoate + (6R)-5,10-methylene-5,6,7,8-tetrahydrofolate + H2O = 2-dehydropantoate + (6S)-5,6,7,8-tetrahydrofolate. It functions in the pathway cofactor biosynthesis; (R)-pantothenate biosynthesis; (R)-pantoate from 3-methyl-2-oxobutanoate: step 1/2. Functionally, catalyzes the reversible reaction in which hydroxymethyl group from 5,10-methylenetetrahydrofolate is transferred onto alpha-ketoisovalerate to form ketopantoate. The polypeptide is 3-methyl-2-oxobutanoate hydroxymethyltransferase (Rhodopseudomonas palustris (strain BisB18)).